The primary structure comprises 251 residues: Phosphate import ATP-binding protein PstB 2 (251 aa).

Residues I5–L246 enclose the ABC transporter domain. G37–S44 contacts ATP.

The protein belongs to the ABC transporter superfamily. Phosphate importer (TC 3.A.1.7) family. As to quaternary structure, the complex is composed of two ATP-binding proteins (PstB), two transmembrane proteins (PstC and PstA) and a solute-binding protein (PstS).

It localises to the cell membrane. It carries out the reaction phosphate(out) + ATP + H2O = ADP + 2 phosphate(in) + H(+). Part of the ABC transporter complex PstSACB involved in phosphate import. Responsible for energy coupling to the transport system. The chain is Phosphate import ATP-binding protein PstB 2 from Lactobacillus acidophilus (strain ATCC 700396 / NCK56 / N2 / NCFM).